Reading from the N-terminus, the 662-residue chain is LIM domain kinase 1 (662 aa).

LIM zinc-binding domains are found at residues P24 to E83 and L84 to T145. The 94-residue stretch at L166–P259 folds into the PDZ domain. The disordered stretch occupies residues P262–S328. The span at S272–A287 shows a compositional bias: pro residues. Over residues S309–S320 the composition is skewed to low complexity. One can recognise a Protein kinase domain in the interval L346–L611. ATP contacts are provided by residues L352–A360 and K375. Residue D467 is part of the active site.

This sequence belongs to the protein kinase superfamily. TKL Ser/Thr protein kinase family. In terms of tissue distribution, expressed predominantly in the brain.

It localises to the cytoplasm. The protein localises to the nucleus. The protein resides in the cytoskeleton. Its subcellular location is the cell projection. It is found in the growth cone. It catalyses the reaction L-seryl-[protein] + ATP = O-phospho-L-seryl-[protein] + ADP + H(+). The catalysed reaction is L-threonyl-[protein] + ATP = O-phospho-L-threonyl-[protein] + ADP + H(+). Its function is as follows. Protein kinase which regulates actin filament dynamics. Phosphorylates and inactivates the actin binding/depolymerizing factor cofilin, thereby stabilizing the actin cytoskeleton. Required for motility of the axon growth cone. This Gallus gallus (Chicken) protein is LIM domain kinase 1 (LIMK1).